Reading from the N-terminus, the 291-residue chain is uncharacterized protein (291 aa).

The next 6 helical transmembrane spans lie at 13–33 (FDLF…MEMG), 40–60 (LGTV…LGFL), 81–101 (GFLN…LICI), 128–148 (FGLF…RLLL), 158–178 (VILG…YLEY), and 220–240 (GNVW…ILLA). N-linked (GlcNAc...) asparagine glycosylation is present at Asn249. Positions 269-291 (MASEDPPKDPLPRQEGGGGDTIA) are disordered.

The protein localises to the membrane. This is an uncharacterized protein from Encephalitozoon cuniculi (strain GB-M1) (Microsporidian parasite).